The sequence spans 78 residues: U5-ctenitoxin-Pk1a (78 aa).

Intrachain disulfides connect Cys-6/Cys-23, Cys-13/Cys-29, Cys-20/Cys-52, Cys-22/Cys-40, Cys-31/Cys-38, Cys-58/Cys-73, and Cys-69/Cys-77.

In terms of tissue distribution, expressed by the venom gland.

The protein localises to the secreted. Lethal neurotoxin. Causes spastic paralysis and death in mice in 4-6 minutes after intracerebroventricular injection at dose levels of 1.5 ug per mouse. The sequence is that of U5-ctenitoxin-Pk1a from Phoneutria keyserlingi (Brazilian wandering spider).